The following is a 34-amino-acid chain: Photosystem II reaction center protein T (34 aa).

Residues 3–23 (ALVYTFLLVGTLGIIFFAIFF) traverse the membrane as a helical segment.

This sequence belongs to the PsbT family. PSII is composed of 1 copy each of membrane proteins PsbA, PsbB, PsbC, PsbD, PsbE, PsbF, PsbH, PsbI, PsbJ, PsbK, PsbL, PsbM, PsbT, PsbY, PsbZ, Psb30/Ycf12, at least 3 peripheral proteins of the oxygen-evolving complex and a large number of cofactors. It forms dimeric complexes.

Its subcellular location is the plastid. It is found in the chloroplast thylakoid membrane. Found at the monomer-monomer interface of the photosystem II (PS II) dimer, plays a role in assembly and dimerization of PSII. PSII is a light-driven water plastoquinone oxidoreductase, using light energy to abstract electrons from H(2)O, generating a proton gradient subsequently used for ATP formation. This is Photosystem II reaction center protein T from Klebsormidium bilatum (Filamentous green alga).